Reading from the N-terminus, the 313-residue chain is Transcription factor MafB (313 aa).

2 disordered regions span residues 51-77 and 151-197; these read QPTG…FSPT and MGLP…VEDR. The segment covering 55 to 76 has biased composition (low complexity); it reads SVSSTPISTPCSSVPSSPSFSP. Residues 154 to 166 show a composition bias toward basic residues; sequence PHHHPHHHQHQHH. The span at 167–192 shows a compositional bias: low complexity; sequence QTSPSPSGSSSSSQQLHHQQQHSSSS. The interval 225–250 is basic motif; the sequence is RLKQKRRTLKNRGYAQSCRYKRVQQK. In terms of domain architecture, bZIP spans 225–288; it reads RLKQKRRTLK…DAYKIKCEKL (64 aa). The interval 253–274 is leucine-zipper; sequence LEGEKTQLVQQVEQLKQEVSRL. The interval 292-313 is disordered; it reads NSSNFREAGSTSDNPSSPEFFM.

It belongs to the bZIP family. Maf subfamily. In terms of assembly, homodimer or heterodimer with other bHLH-Zip transcription factors. Binds DNA as a homodimer or a heterodimer.

Its subcellular location is the nucleus. Acts as a transcriptional activator or repressor. Implicated in the regulation of cell-type specific gene expression and play a role in inductive events during lens development. This chain is Transcription factor MafB (mafb), found in Xenopus laevis (African clawed frog).